Consider the following 79-residue polypeptide: Sec-independent protein translocase protein TatA (79 aa).

A helical transmembrane segment spans residues 1-21 (MGGISIWQLLIVALIVVLLFG). The disordered stretch occupies residues 43-79 (MSSEEDKKALEDTEAAKTAQTTQQATEKKPESNKEQA). The span at 46–57 (EEDKKALEDTEA) shows a compositional bias: basic and acidic residues. A compositionally biased stretch (low complexity) spans 58 to 67 (AKTAQTTQQA). Residues 68-79 (TEKKPESNKEQA) are compositionally biased toward basic and acidic residues.

This sequence belongs to the TatA/E family. As to quaternary structure, the Tat system comprises two distinct complexes: a TatABC complex, containing multiple copies of TatA, TatB and TatC subunits, and a separate TatA complex, containing only TatA subunits. Substrates initially bind to the TatABC complex, which probably triggers association of the separate TatA complex to form the active translocon.

It is found in the cell inner membrane. In terms of biological role, part of the twin-arginine translocation (Tat) system that transports large folded proteins containing a characteristic twin-arginine motif in their signal peptide across membranes. TatA could form the protein-conducting channel of the Tat system. This Shewanella baltica (strain OS223) protein is Sec-independent protein translocase protein TatA.